The sequence spans 147 residues: Small ribosomal subunit protein bS16 (147 aa).

The interval 81 to 147 (QKFTGDTSPS…GDNSGEKAEA (67 aa)) is disordered. Composition is skewed to basic and acidic residues over residues 95–104 (QPERPNKDDL) and 114–125 (EAPREAITKKSE). A compositionally biased stretch (low complexity) spans 126–140 (GAAADEASESAAGDN).

It belongs to the bacterial ribosomal protein bS16 family.

This is Small ribosomal subunit protein bS16 from Cutibacterium acnes (strain DSM 16379 / KPA171202) (Propionibacterium acnes).